A 378-amino-acid chain; its full sequence is 5-amino-6-(D-ribitylamino)uracil--L-tyrosine 4-hydroxyphenyl transferase (378 aa).

Positions 59 to 306 (VTYVINRNIN…TAVARIYLGN (248 aa)) constitute a Radical SAM core domain. C73, C77, and C80 together coordinate [4Fe-4S] cluster.

This sequence belongs to the radical SAM superfamily. CofH family. Consists of two subunits, CofG and CofH. It depends on [4Fe-4S] cluster as a cofactor.

The enzyme catalyses 5-amino-6-(D-ribitylamino)uracil + L-tyrosine + S-adenosyl-L-methionine = 5-amino-5-(4-hydroxybenzyl)-6-(D-ribitylimino)-5,6-dihydrouracil + 2-iminoacetate + 5'-deoxyadenosine + L-methionine + H(+). It functions in the pathway cofactor biosynthesis; coenzyme F0 biosynthesis. In terms of biological role, catalyzes the radical-mediated synthesis of 5-amino-5-(4-hydroxybenzyl)-6-(D-ribitylimino)-5,6-dihydrouracil from 5-amino-6-(D-ribitylamino)uracil and L-tyrosine. In Microcystis aeruginosa (strain NIES-843 / IAM M-2473), this protein is 5-amino-6-(D-ribitylamino)uracil--L-tyrosine 4-hydroxyphenyl transferase.